Consider the following 491-residue polypeptide: HEPACAM family member 2 (491 aa).

An N-terminal signal peptide occupies residues 1–18 (MWLRVFTAFLSFTAGACS). Asn-73, Asn-117, and Asn-153 each carry an N-linked (GlcNAc...) asparagine glycan. Ig-like C2-type domains lie at 137 to 221 (PVVQ…SDII) and 223 to 319 (PTIY…THFT). Cystine bridges form between Cys-158–Cys-207 and Cys-258–Cys-303. The N-linked (GlcNAc...) asparagine glycan is linked to Asn-308. The chain crosses the membrane as a helical span at residues 340 to 360 (LASITGISLFLIISMCLLFLW). The Cytoplasmic portion of the chain corresponds to 361–491 (KKFQPYKVIK…GKHSRAKQCI (131 aa)). The segment covering 444 to 454 (QQQDHPESSSQ) has biased composition (polar residues). Disordered stretches follow at residues 444-466 (QQQD…DRHD) and 472-491 (ELGH…KQCI). The segment covering 472 to 482 (ELGHCKEQDKG) has biased composition (basic and acidic residues).

Post-translationally, poly-ADP-ribosylated (PARsylated) by tankyrase TNKS during late G2 and prophase, leading to translocation to mitotic centrosomes. In terms of processing, N-glycosylated.

The protein resides in the golgi apparatus membrane. It is found in the cytoplasm. It localises to the cytoskeleton. The protein localises to the spindle. Its subcellular location is the microtubule organizing center. The protein resides in the centrosome. It is found in the midbody. Its function is as follows. Required during prometaphase for centrosome maturation. Following poly-ADP-ribosylation (PARsylation) by TNKS, translocates from the Golgi apparatus to mitotic centrosomes and plays a key role in the formation of robust microtubules for prompt movement of chromosomes: anchors AKAP9/CG-NAP, a scaffold protein of the gamma-tubulin ring complex and promotes centrosome maturation. In Bos taurus (Bovine), this protein is HEPACAM family member 2 (HEPACAM2).